A 605-amino-acid chain; its full sequence is Glutamine--fructose-6-phosphate aminotransferase [isomerizing] (605 aa).

Catalysis depends on Cys-2, which acts as the Nucleophile; for GATase activity. Positions Cys-2 to Asp-219 constitute a Glutamine amidotransferase type-2 domain. 2 SIS domains span residues Ile-285 to Glu-424 and Val-457 to Pro-595. Catalysis depends on Lys-600, which acts as the For Fru-6P isomerization activity.

In terms of assembly, homodimer.

Its subcellular location is the cytoplasm. The enzyme catalyses D-fructose 6-phosphate + L-glutamine = D-glucosamine 6-phosphate + L-glutamate. Its function is as follows. Catalyzes the first step in hexosamine metabolism, converting fructose-6P into glucosamine-6P using glutamine as a nitrogen source. The chain is Glutamine--fructose-6-phosphate aminotransferase [isomerizing] from Lactococcus lactis subsp. lactis (strain IL1403) (Streptococcus lactis).